Reading from the N-terminus, the 424-residue chain is S-phase kinase-associated protein 2 (424 aa).

A disordered region spans residues 52-73 (PHGLLSNLGHPQSPPRKRVKGK). Residue Ser-64 is modified to Phosphoserine. Residues 67–73 (RKRVKGK) carry the Nuclear localization signal motif. N6-acetyllysine; by p300/EP300 occurs at positions 68 and 71. Ser-75 bears the Phosphoserine mark. In terms of domain architecture, F-box spans 94–140 (GVSWDSLPDELLLGIFSCLCLPELLRVSGVCKRWYRLSLDESLWQSL). 10 LRR repeats span residues 151 to 176 (VTVR…PLGE), 177 to 204 (SFSS…ILSE), 210 to 234 (NLSL…NLVR), 235 to 257 (LNLC…SCSR), 258 to 284 (LDEL…LPNT), 286 to 308 (TQLN…IIKR), 309 to 330 (CPNL…CFPE), 334 to 356 (LNYL…LLEL), 359 to 378 (IPTL…TLQL), and 380 to 401 (REAL…RPTM). Ser-179 carries the phosphoserine modification.

Part of a SCF(SKP2) complex consisting of CUL1, RBX1, SKP1 and SKP2. Component of a SCF(SKP2)-like complex containing CUL1, SKP1, TRIM21 and SKP2. Interacts directly with CUL1 and SKP1. Interacts with ASB2 which is the substrate-recognition component of a probable ECS E3 ubiquitin-protein ligase complex; ASB2 is likely to bridge the formation of dimeric E3-ubiquitin-protein ligase complexes composed of an ECS complex and an SCF(SKP2) complex. Interacts with CKS1. Interacts with the cyclin-A-CDK2 complex. Interacts with ORC1, phosphorylated CDT1, phosphorylated RBL2, ELF4, phosphorylated RAG2, FOXO1, UBP43, MYC, TOB1, TAL1 and KMT2A/MLL1. Interacts with TRIM21. Interacts with cyclin-E. Interacts with CARM1. In terms of processing, phosphorylated on serine and threonine resudues in response to DNA damage, promoting 'Lys-63'-linked ubiquitination of NBN. Ubiquitinated by the APC/C complex, leading to its degradation by the proteasome. Deubiquitinated by USP13. Post-translationally, acetylation at Lys-68 and Lys-71 increases stability through impairment of APC/C-mediated proteolysis and promotes cytoplasmic retention. Deacetylated by SIRT3.

It localises to the cytoplasm. The protein resides in the nucleus. The protein operates within protein modification; protein ubiquitination. In terms of biological role, substrate recognition component of a SCF (SKP1-CUL1-F-box protein) E3 ubiquitin-protein ligase complex which mediates the ubiquitination and subsequent proteasomal degradation of target proteins involved in cell cycle progression, signal transduction and transcription. Specifically recognizes phosphorylated CDKN1B/p27kip and is involved in regulation of G1/S transition. Degradation of CDKN1B/p27kip also requires CKS1. Recognizes target proteins ORC1, CDT1, RBL2, KMT2A/MLL1, CDK9, RAG2, NBN, FOXO1, UBP43, YTHDF2, and probably MYC, TOB1 and TAL1. Degradation of TAL1 also requires STUB1. Recognizes CDKN1A in association with CCNE1 or CCNE2 and CDK2. Promotes ubiquitination and destruction of CDH1 in a CK1-dependent manner, thereby regulating cell migration. Following phosphorylation in response to DNA damage, mediates 'Lys-63'-linked ubiquitination of NBN, promoting ATM recruitment to DNA damage sites and DNA repair via homologous recombination. Functionally, through the ubiquitin-mediated proteasomal degradation of viral proteins may have an antiviral activity. The polypeptide is S-phase kinase-associated protein 2 (Skp2) (Mus musculus (Mouse)).